Consider the following 229-residue polypeptide: Peptidyl-prolyl cis-trans isomerase FKBP17-1, chloroplastic (229 aa).

A chloroplast-targeting transit peptide spans 1–63; it reads MIRCFAWTPL…SISLSIIAVT (63 aa). Residues 105–225 form the PPIase FKBP-type domain; that stretch reads GDQIEIHYYG…VFDIELVSTR (121 aa).

Belongs to the FKBP-type PPIase family.

Its subcellular location is the plastid. The protein localises to the chloroplast thylakoid lumen. It catalyses the reaction [protein]-peptidylproline (omega=180) = [protein]-peptidylproline (omega=0). Its function is as follows. PPIases accelerate the folding of proteins. It catalyzes the cis-trans isomerization of proline imidic peptide bonds in oligopeptides. The protein is Peptidyl-prolyl cis-trans isomerase FKBP17-1, chloroplastic (FKBP17-1) of Arabidopsis thaliana (Mouse-ear cress).